A 401-amino-acid polypeptide reads, in one-letter code: S-adenosylmethionine synthase (401 aa).

His-15 is an ATP binding site. Position 17 (Asp-17) interacts with Mg(2+). Glu-43 is a K(+) binding site. Residues Glu-56 and Gln-99 each coordinate L-methionine. Residues 99–109 form a flexible loop region; sequence QSPEIGAGVDT. A disordered region spans residues 101–132; the sequence is PEIGAGVDTSHEVRGSSSTDEDDRQGAGDQGL. Residues 174 to 176, Asp-254, 260 to 261, Ala-277, and Lys-281 each bind ATP; these read DGK and RK. Asp-254 provides a ligand contact to L-methionine. Position 285 (Lys-285) interacts with L-methionine.

The protein belongs to the AdoMet synthase family. In terms of assembly, homotetramer; dimer of dimers. It depends on Mg(2+) as a cofactor. The cofactor is K(+).

The protein localises to the cytoplasm. The catalysed reaction is L-methionine + ATP + H2O = S-adenosyl-L-methionine + phosphate + diphosphate. It participates in amino-acid biosynthesis; S-adenosyl-L-methionine biosynthesis; S-adenosyl-L-methionine from L-methionine: step 1/1. In terms of biological role, catalyzes the formation of S-adenosylmethionine (AdoMet) from methionine and ATP. The overall synthetic reaction is composed of two sequential steps, AdoMet formation and the subsequent tripolyphosphate hydrolysis which occurs prior to release of AdoMet from the enzyme. In Corynebacterium urealyticum (strain ATCC 43042 / DSM 7109), this protein is S-adenosylmethionine synthase.